We begin with the raw amino-acid sequence, 666 residues long: Putative L-type lectin-domain containing receptor kinase V.1 (666 aa).

An N-terminal signal peptide occupies residues 1 to 18 (MVLLLFLVLFFVPESVVC). Residues 19–289 (QRPNPNGVEF…WIQSPNGILT (271 aa)) are Extracellular-facing. A legume-lectin like region spans residues 27–257 (EFNTSGNMYT…SHYILGWTFK (231 aa)). N-linked (GlcNAc...) asparagine glycans are attached at residues asparagine 29, asparagine 74, asparagine 123, asparagine 176, asparagine 204, and asparagine 259. A helical membrane pass occupies residues 290-310 (ISLTVSGVIILIILSLSLWLF). At 311-666 (LKRKKLLEVL…FTESFVSHGR (356 aa)) the chain is on the cytoplasmic side. The region spanning 344-625 (FKDTEVLGKG…SVAQLPHNLL (282 aa)) is the Protein kinase domain. ATP contacts are provided by residues 350 to 358 (LGKGGFGKV) and lysine 373. Aspartate 469 (proton acceptor) is an active-site residue.

This sequence in the C-terminal section; belongs to the protein kinase superfamily. Ser/Thr protein kinase family. It in the N-terminal section; belongs to the leguminous lectin family.

The protein localises to the cell membrane. It carries out the reaction L-seryl-[protein] + ATP = O-phospho-L-seryl-[protein] + ADP + H(+). It catalyses the reaction L-threonyl-[protein] + ATP = O-phospho-L-threonyl-[protein] + ADP + H(+). This is Putative L-type lectin-domain containing receptor kinase V.1 (LECRK51) from Arabidopsis thaliana (Mouse-ear cress).